A 438-amino-acid polypeptide reads, in one-letter code: Glutaryl-CoA dehydrogenase, mitochondrial (438 aa).

The N-terminal 44 residues, 1–44 (MALRGVSVRLLSRGPGLHVLRTWVSSAAQTEKGGRTQSQLAKSS), are a transit peptide targeting the mitochondrion. Residues 138–139 (RS) and Ser-186 contribute to the substrate site. FAD is bound by residues 177-186 (FGLTEPNSGS) and 212-214 (WIT). Lys-240 carries the post-translational modification N6-acetyllysine. 287 to 294 (FGCLNNAR) provides a ligand contact to substrate. FAD-binding positions include Arg-319, Gln-330, and 387–391 (DMLGG). Glu-414 (proton acceptor) is an active-site residue. Residue Gly-415 participates in substrate binding. FAD-binding positions include 416–418 (THD) and Phe-434.

It belongs to the acyl-CoA dehydrogenase family. In terms of assembly, homotetramer. FAD is required as a cofactor. As to expression, isoform Long and isoform Short are expressed in fibroblasts and liver.

It localises to the mitochondrion matrix. The enzyme catalyses glutaryl-CoA + oxidized [electron-transfer flavoprotein] + 2 H(+) = (2E)-butenoyl-CoA + reduced [electron-transfer flavoprotein] + CO2. The protein operates within amino-acid metabolism; lysine degradation. Its pathway is amino-acid metabolism; tryptophan metabolism. Strongly inhibited by MCPA-CoA, a metabolite of hypoglycin which is present in unripened fruit of the ackee tree. In terms of biological role, catalyzes the oxidative decarboxylation of glutaryl-CoA to crotonyl-CoA and CO(2) in the degradative pathway of L-lysine, L-hydroxylysine, and L-tryptophan metabolism. It uses electron transfer flavoprotein as its electron acceptor. Isoform Short is inactive. In Homo sapiens (Human), this protein is Glutaryl-CoA dehydrogenase, mitochondrial (GCDH).